The primary structure comprises 490 residues: E3 ubiquitin-protein ligase Hakai (490 aa).

Residues 34–60 (QANKAKPAPRTQRTINRMPAKAPPGDE) form a disordered region. An RING-type zinc finger spans residues 108–148 (CDKCGLPIKIYGRMIPCKHVFCYDCAILHEKKGDKMCPGCS). The tract at residues 147–205 (CSDPVQRIEQCTRGSLFMCSIVQGCKRTYLSQRDLQAHINHRHMRAGKPVTRASLENVH) is HYB domain. A C2H2-type zinc finger spans residues 163-189 (FMCSIVQGCKRTYLSQRDLQAHINHRH). 3 positions are modified to phosphoserine: S200, S284, and S289. The tract at residues 254-490 (QPHEDIRAPP…DQTRYRPYYQ (237 aa)) is disordered. Composition is skewed to pro residues over residues 341-358 (APPP…PHPP), 371-388 (APPP…PPPG), and 398-422 (MNHP…PPHH). Over residues 426 to 441 (NSLPQFTEDQGTLSPP) the composition is skewed to polar residues. Residues 456 to 477 (PRGPPPPPRLQGPPSQTPLPGP) show a composition bias toward pro residues.

The protein belongs to the Hakai family. In terms of assembly, homodimer. Interacts with tyrosine-phosphorylated SRC substrates. Component of the WMM complex, a N6-methyltransferase complex composed of a catalytic subcomplex, named MAC, and of an associated subcomplex, named MACOM. The MAC subcomplex is composed of METTL3 and METTL14. The MACOM subcomplex is composed of WTAP, ZC3H13, CBLL1/HAKAI, VIRMA, and, in some cases of RBM15 (RBM15 or RBM15B). Also a component of a MACOM-like complex, named WTAP complex, composed of WTAP, ZC3H13, CBLL1, VIRMA, RBM15, BCLAF1 and THRAP3. Post-translationally, phosphorylated on tyrosine residues.

Its subcellular location is the nucleus speckle. The protein resides in the nucleus. It is found in the nucleoplasm. The protein localises to the cytoplasm. The catalysed reaction is S-ubiquitinyl-[E2 ubiquitin-conjugating enzyme]-L-cysteine + [acceptor protein]-L-lysine = [E2 ubiquitin-conjugating enzyme]-L-cysteine + N(6)-ubiquitinyl-[acceptor protein]-L-lysine.. Its pathway is protein modification; protein ubiquitination. E3 ubiquitin-protein ligase that mediates ubiquitination of several tyrosine-phosphorylated Src substrates, including CDH1, CTTN and DOK1. Targets CDH1 for endocytosis and degradation. Associated component of the WMM complex, a complex that mediates N6-methyladenosine (m6A) methylation of RNAs, a modification that plays a role in the efficiency of mRNA splicing and RNA processing. Its function in the WMM complex is unknown. The protein is E3 ubiquitin-protein ligase Hakai of Macaca fascicularis (Crab-eating macaque).